We begin with the raw amino-acid sequence, 254 residues long: Imidazole glycerol phosphate synthase subunit HisF (254 aa).

Residues Asp-11 and Asp-130 contribute to the active site.

It belongs to the HisA/HisF family. As to quaternary structure, heterodimer of HisH and HisF.

The protein localises to the cytoplasm. It catalyses the reaction 5-[(5-phospho-1-deoxy-D-ribulos-1-ylimino)methylamino]-1-(5-phospho-beta-D-ribosyl)imidazole-4-carboxamide + L-glutamine = D-erythro-1-(imidazol-4-yl)glycerol 3-phosphate + 5-amino-1-(5-phospho-beta-D-ribosyl)imidazole-4-carboxamide + L-glutamate + H(+). It functions in the pathway amino-acid biosynthesis; L-histidine biosynthesis; L-histidine from 5-phospho-alpha-D-ribose 1-diphosphate: step 5/9. Functionally, IGPS catalyzes the conversion of PRFAR and glutamine to IGP, AICAR and glutamate. The HisF subunit catalyzes the cyclization activity that produces IGP and AICAR from PRFAR using the ammonia provided by the HisH subunit. This chain is Imidazole glycerol phosphate synthase subunit HisF, found in Chromobacterium violaceum (strain ATCC 12472 / DSM 30191 / JCM 1249 / CCUG 213 / NBRC 12614 / NCIMB 9131 / NCTC 9757 / MK).